We begin with the raw amino-acid sequence, 89 residues long: Co-chaperonin GroES (89 aa).

The protein belongs to the GroES chaperonin family. Heptamer of 7 subunits arranged in a ring. Interacts with the chaperonin GroEL.

The protein localises to the cytoplasm. Functionally, together with the chaperonin GroEL, plays an essential role in assisting protein folding. The GroEL-GroES system forms a nano-cage that allows encapsulation of the non-native substrate proteins and provides a physical environment optimized to promote and accelerate protein folding. GroES binds to the apical surface of the GroEL ring, thereby capping the opening of the GroEL channel. The sequence is that of Co-chaperonin GroES from Parabacteroides distasonis (strain ATCC 8503 / DSM 20701 / CIP 104284 / JCM 5825 / NCTC 11152).